A 347-amino-acid chain; its full sequence is S-adenosylmethionine:tRNA ribosyltransferase-isomerase (347 aa).

Belongs to the QueA family. Monomer.

It is found in the cytoplasm. It catalyses the reaction 7-aminomethyl-7-carbaguanosine(34) in tRNA + S-adenosyl-L-methionine = epoxyqueuosine(34) in tRNA + adenine + L-methionine + 2 H(+). It functions in the pathway tRNA modification; tRNA-queuosine biosynthesis. Functionally, transfers and isomerizes the ribose moiety from AdoMet to the 7-aminomethyl group of 7-deazaguanine (preQ1-tRNA) to give epoxyqueuosine (oQ-tRNA). The polypeptide is S-adenosylmethionine:tRNA ribosyltransferase-isomerase (Pseudomonas aeruginosa (strain ATCC 15692 / DSM 22644 / CIP 104116 / JCM 14847 / LMG 12228 / 1C / PRS 101 / PAO1)).